Reading from the N-terminus, the 582-residue chain is UPF0329 protein ECU07_0070 (582 aa).

Positions 326-386 are disordered; that stretch reads EEKAKSKKKG…KTGKKSKGDQ (61 aa). The span at 330–339 shows a compositional bias: basic residues; it reads KSKKKGKKKS. Basic and acidic residues predominate over residues 344–354; the sequence is EAKEEEKKESG.

This sequence belongs to the UPF0329 family.

This is UPF0329 protein ECU07_0070 from Encephalitozoon cuniculi (strain GB-M1) (Microsporidian parasite).